The sequence spans 859 residues: Catenin delta-1 (859 aa).

The stretch at 15–44 (SVRAQEAQFELLSRALEEERRHVTAQLDRV) forms a coiled coil. Residues 226–254 (IDGPDYATTGRRGANGGDPRRRLRSYEDP) are disordered. Over residues 243–254 (DPRRRLRSYEDP) the composition is skewed to basic and acidic residues. ARM repeat units lie at residues 279–317 (APNS…HLSY), 320–359 (EDVK…NLSY), 363–401 (RENK…VTGT), 402–446 (LWNL…RVEG), 464–503 (LRNI…LVDS), 513–552 (LRNI…VRRG), 574–614 (AQGY…NLCA), 621–660 (RCIR…NLCG), 661–700 (DNRN…CVIN), and 701–746 (TIHE…GFCL).

This sequence belongs to the beta-catenin family. In terms of assembly, interacts with C-cadherin and with zbtb33. Ubiquitously expressed.

It localises to the cell junction. It is found in the adherens junction. The protein resides in the cytoplasm. The protein localises to the nucleus. Its subcellular location is the cell membrane. Its function is as follows. Key regulator of cell-cell adhesion that associates with and regulates the cell adhesion properties of both C-, E- and N-cadherins, being critical for their surface stability. Beside cell-cell adhesion, regulates gene transcription through several transcription factors including ZBTB33/Kaiso2 and GLIS2, and the activity of Rho family GTPases and downstream cytoskeletal dynamics. Implicated both in cell transformation by SRC and in ligand-induced receptor signaling through the EGF, PDGF, CSF-1 and ERBB2 receptors. Required for gastrulation, axial elongation and development of the craniofacial skeleton and eye. In Xenopus laevis (African clawed frog), this protein is Catenin delta-1 (ctnnd1).